The chain runs to 443 residues: Ribosomal protein uS12 methylthiotransferase RimO (443 aa).

An MTTase N-terminal domain is found at 6–116 (PRVGMISLGC…VVNAVHDVVP (111 aa)). The [4Fe-4S] cluster site is built by Cys-15, Cys-51, Cys-80, Cys-149, Cys-153, and Cys-156. In terms of domain architecture, Radical SAM core spans 135–373 (LTPRHYAYLK…MAHQQAISAA (239 aa)). The 68-residue stretch at 376-443 (QMKIGKEIEV…DEYDLWAEML (68 aa)) folds into the TRAM domain.

The protein belongs to the methylthiotransferase family. RimO subfamily. Requires [4Fe-4S] cluster as cofactor.

It is found in the cytoplasm. The enzyme catalyses L-aspartate(89)-[ribosomal protein uS12]-hydrogen + (sulfur carrier)-SH + AH2 + 2 S-adenosyl-L-methionine = 3-methylsulfanyl-L-aspartate(89)-[ribosomal protein uS12]-hydrogen + (sulfur carrier)-H + 5'-deoxyadenosine + L-methionine + A + S-adenosyl-L-homocysteine + 2 H(+). Its function is as follows. Catalyzes the methylthiolation of an aspartic acid residue of ribosomal protein uS12. This Pseudomonas syringae pv. tomato (strain ATCC BAA-871 / DC3000) protein is Ribosomal protein uS12 methylthiotransferase RimO.